Consider the following 478-residue polypeptide: Methionine aminopeptidase 2-1 (478 aa).

The tract at residues 1 to 124 (MGSKSPEGHN…PRVPLSTLFP (124 aa)) is disordered. A compositionally biased stretch (acidic residues) spans 46–56 (NDDDDADDDEK). Basic residues predominate over residues 92–104 (KKKKKRKRSKKKA). H230 contacts substrate. 3 residues coordinate a divalent metal cation: D251, D262, and H331. H339 provides a ligand contact to substrate. Residues E364 and E459 each contribute to the a divalent metal cation site.

It belongs to the peptidase M24A family. Methionine aminopeptidase eukaryotic type 2 subfamily. It depends on Co(2+) as a cofactor. Zn(2+) is required as a cofactor. Mn(2+) serves as cofactor. The cofactor is Fe(2+).

The protein localises to the cytoplasm. The catalysed reaction is Release of N-terminal amino acids, preferentially methionine, from peptides and arylamides.. In terms of biological role, cotranslationally removes the N-terminal methionine from nascent proteins. The N-terminal methionine is often cleaved when the second residue in the primary sequence is small and uncharged (Met-Ala-, Cys, Gly, Pro, Ser, Thr, or Val). The polypeptide is Methionine aminopeptidase 2-1 (Aspergillus clavatus (strain ATCC 1007 / CBS 513.65 / DSM 816 / NCTC 3887 / NRRL 1 / QM 1276 / 107)).